Consider the following 392-residue polypeptide: THO complex subunit MFT1 (392 aa).

Composition is skewed to acidic residues over residues 258 to 271 (DNID…EDEE) and 290 to 330 (NVDE…EVDG). Residues 258-392 (DNIDEDYESD…SASSSVEEVK (135 aa)) form a disordered region. At Ser266 the chain carries Phosphoserine. A compositionally biased stretch (polar residues) spans 331–344 (ESSQQEDNSRQGNN). A compositionally biased stretch (acidic residues) spans 345-367 (EETDKETGVIEEPDAVNDAEEAD). Residues 377-392 (GTTSDFSASSSVEEVK) are compositionally biased toward polar residues.

Component of the THO complex, which is composed of HPR1, MFT1, THO2 and THP2. Together with SUB2, TEX1 and YRA1, THO forms the transcription/export (TREX) complex. THO associates with DNA and RNA in vitro.

It localises to the nucleus. Its function is as follows. Component the THO subcomplex of the TREX complex, which operates in coupling transcription elongation to mRNA export. The THO complex is recruited to transcribed genes and moves along the gene with the elongating polymerase during transcription. THO is important for stabilizing nascent RNA in the RNA polymerase II elongation complex by preventing formation of DNA:RNA hybrids behind the elongating polymerase. It functions in cotranscriptional formation of an export-competent messenger ribonucleoprotein particle (mRNP) by facilitating the loading of ATP-dependent RNA helicase SUB2 and the mRNA export factor YRA1 along the nascent mRNA. The protein is THO complex subunit MFT1 (MFT1) of Saccharomyces cerevisiae (strain ATCC 204508 / S288c) (Baker's yeast).